Consider the following 204-residue polypeptide: Protease (204 aa).

Catalysis depends on residues histidine 54, aspartate 71, and cysteine 122.

The protein belongs to the peptidase C5 family. In terms of assembly, interacts with protease cofactor pVI-C; this interaction is necessary for protease activation.

Its subcellular location is the virion. The protein resides in the host nucleus. It carries out the reaction Cleaves proteins of the adenovirus and its host cell at two consensus sites: -Yaa-Xaa-Gly-Gly-|-Xaa- and -Yaa-Xaa-Gly-Xaa-|-Gly- (in which Yaa is Met, Ile or Leu, and Xaa is any amino acid).. Its activity is regulated as follows. Requires DNA and protease cofactor for maximal activation. Inside nascent virions, becomes partially activated by binding to the viral DNA, allowing it to cleave the cofactor that binds to the protease and fully activates it. Actin, like the viral protease cofactor, seems to act as a cofactor in the cleavage of cytokeratin 18 and of actin itself. Its function is as follows. Cleaves viral precursor proteins (pTP, pIIIa, pVI, pVII, pVIII, and pX) inside newly assembled particles giving rise to mature virions. Protease complexed to its cofactor slides along the viral DNA to specifically locate and cleave the viral precursors. Mature virions have a weakened organization compared to the unmature virions, thereby facilitating subsequent uncoating. Without maturation, the particle lacks infectivity and is unable to uncoat. Late in adenovirus infection, in the cytoplasm, may participate in the cytoskeleton destruction. Cleaves host cell cytoskeletal keratins K7 and K18. In Bos taurus (Bovine), this protein is Protease.